Consider the following 325-residue polypeptide: Natural cytotoxicity triggering receptor 1 (325 aa).

The N-terminal stretch at 1–16 (MLPTLTALLCLGLCLS) is a signal peptide. Residues 17 to 255 (QRINTEKETL…SAFWDHTTQN (239 aa)) are Extracellular-facing. Ig-like domains are found at residues 34-118 (KPSI…LVVT) and 129-211 (YPRP…LLIT). The cysteines at positions 49 and 98 are disulfide-linked. Asn139 carries N-linked (GlcNAc...) asparagine glycosylation. Cys144 and Cys190 form a disulfide bridge. Residues Asn216 and Asn238 are each glycosylated (N-linked (GlcNAc...) asparagine). Residues 256–273 (LIRIGLACIILITLVWLL) form a helical membrane-spanning segment. Residues 274 to 325 (TEDWLSKRKDHEEANRLTNWECRRRWRMQHYFEEEQRNAISMMELKATPGAL) lie on the Cytoplasmic side of the membrane.

This sequence belongs to the natural cytotoxicity receptor (NCR) family. Interacts with CD3Z and FCER1G. As to expression, selectively expressed by NK cells.

The protein resides in the cell membrane. Its function is as follows. Cytotoxicity-activating receptor that may contribute to the increased efficiency of activated natural killer (NK) cells to mediate tumor cell lysis. In Mus musculus (Mouse), this protein is Natural cytotoxicity triggering receptor 1 (Ncr1).